We begin with the raw amino-acid sequence, 207 residues long: Small ribosomal subunit protein uS4c (207 aa).

The region spanning 92 to 153 (MRLDNILFRL…PKTYQSILSK (62 aa)) is the S4 RNA-binding domain.

Belongs to the universal ribosomal protein uS4 family. In terms of assembly, part of the 30S ribosomal subunit. Contacts protein S5. The interaction surface between S4 and S5 is involved in control of translational fidelity.

The protein localises to the plastid. Its subcellular location is the chloroplast. Its function is as follows. One of the primary rRNA binding proteins, it binds directly to 16S rRNA where it nucleates assembly of the body of the 30S subunit. In terms of biological role, with S5 and S12 plays an important role in translational accuracy. This chain is Small ribosomal subunit protein uS4c (rps4), found in Equisetum hyemale (Dutch rush).